We begin with the raw amino-acid sequence, 119 residues long: MKKVKEAEKRNIKRKKRIRDRIGFGVAERPRVTIFKSNKYFYAQVIDDIVGHTLASVSTIEKELSLNKNISDVKKLGEVLAKRLKDKNISKLIFDRNGYKYHGLIAGFATALREAGIDV.

The protein belongs to the universal ribosomal protein uL18 family. In terms of assembly, part of the 50S ribosomal subunit; part of the 5S rRNA/L5/L18/L25 subcomplex. Contacts the 5S and 23S rRNAs.

In terms of biological role, this is one of the proteins that bind and probably mediate the attachment of the 5S RNA into the large ribosomal subunit, where it forms part of the central protuberance. This is Large ribosomal subunit protein uL18 from Borrelia duttonii (strain Ly).